Consider the following 348-residue polypeptide: L-threonine 3-dehydrogenase (348 aa).

Cys42 contributes to the Zn(2+) binding site. Catalysis depends on charge relay system residues Thr44 and His47. Residues His67, Glu68, Cys97, Cys100, Cys103, and Cys111 each contribute to the Zn(2+) site. Residues Leu179, Glu199, Arg204, 266 to 268, and 291 to 292 each bind NAD(+); these read LGL and IT.

It belongs to the zinc-containing alcohol dehydrogenase family. Homotetramer. Requires Zn(2+) as cofactor.

Its subcellular location is the cytoplasm. It carries out the reaction L-threonine + NAD(+) = (2S)-2-amino-3-oxobutanoate + NADH + H(+). Its pathway is amino-acid degradation; L-threonine degradation via oxydo-reductase pathway; glycine from L-threonine: step 1/2. Catalyzes the NAD(+)-dependent oxidation of L-threonine to 2-amino-3-ketobutyrate. This chain is L-threonine 3-dehydrogenase, found in Pyrococcus abyssi (strain GE5 / Orsay).